The sequence spans 368 residues: Aminomethyltransferase (368 aa).

This sequence belongs to the GcvT family. In terms of assembly, the glycine cleavage system is composed of four proteins: P, T, L and H.

It carries out the reaction N(6)-[(R)-S(8)-aminomethyldihydrolipoyl]-L-lysyl-[protein] + (6S)-5,6,7,8-tetrahydrofolate = N(6)-[(R)-dihydrolipoyl]-L-lysyl-[protein] + (6R)-5,10-methylene-5,6,7,8-tetrahydrofolate + NH4(+). The glycine cleavage system catalyzes the degradation of glycine. This is Aminomethyltransferase from Xylella fastidiosa (strain 9a5c).